Here is a 323-residue protein sequence, read N- to C-terminus: MADKQISLPAKLINGGIAGLIGVTCVFPIDLAKTRLQNQQNGQRMYASMSDCLIKTIRSEGYFGMYRGAAVNLTLVTPEKAIKLAANDFFRHQLSKDGQKLTLPKEMLAGCGAGTCQVIVTTPMEMLKIQLQDAGRIAAQRKILAAQAQLSAQGGAQPSVEAPAPPRPTATQLTRDLLRNHGIAGLYKGLGATLLRDVPFSIVYFPLFANLNQLGRPSSEEKSPFYVSFLAGCVAGSAAAVAVNPCDVVKTRLQSLERGVNEDTYSGFLDCARKIWRHEGPSAFLKGAYCRALVIAPLFGIAQVVYFLGIAESLLGLLQEPQA.

3 Solcar repeats span residues 6 to 93 (ISLP…FRHQ), 101 to 214 (LTLP…LNQL), and 223 to 312 (SPFY…GIAE). Helical transmembrane passes span 12 to 32 (LING…IDLA), 62 to 82 (YFGM…EKAI), 107 to 127 (MLAG…MEML), 189 to 209 (GLGA…PLFA), 223 to 243 (SPFY…AVAV), and 292 to 312 (ALVI…GIAE).

The protein belongs to the mitochondrial carrier (TC 2.A.29) family.

The protein resides in the mitochondrion inner membrane. The enzyme catalyses L-glutamate(in) + H(+)(in) = L-glutamate(out) + H(+)(out). Functionally, mitochondrial glutamate/H(+) symporter. Responsible for the transport of glutamate from the cytosol into the mitochondrial matrix with the concomitant import of a proton. Plays a role in the control of glucose-stimulated insulin secretion. The protein is Mitochondrial glutamate carrier 1 (Slc25a22) of Mus musculus (Mouse).